Reading from the N-terminus, the 102-residue chain is NADH-quinone oxidoreductase subunit K (102 aa).

Helical transmembrane passes span 6 to 26 (ATHF…GVLT), 31 to 51 (LVIF…LIGF), and 62 to 82 (VFAL…LGIV).

The protein belongs to the complex I subunit 4L family. In terms of assembly, NDH-1 is composed of 14 different subunits. Subunits NuoA, H, J, K, L, M, N constitute the membrane sector of the complex.

Its subcellular location is the cell membrane. It catalyses the reaction a quinone + NADH + 5 H(+)(in) = a quinol + NAD(+) + 4 H(+)(out). Functionally, NDH-1 shuttles electrons from NADH, via FMN and iron-sulfur (Fe-S) centers, to quinones in the respiratory chain. The immediate electron acceptor for the enzyme in this species is believed to be ubiquinone. Couples the redox reaction to proton translocation (for every two electrons transferred, four hydrogen ions are translocated across the cytoplasmic membrane), and thus conserves the redox energy in a proton gradient. In Thermomicrobium roseum (strain ATCC 27502 / DSM 5159 / P-2), this protein is NADH-quinone oxidoreductase subunit K.